Consider the following 344-residue polypeptide: F17a-G fimbrial adhesin (344 aa).

The N-terminal stretch at 1 to 22 is a signal peptide; sequence MTNFYKVFLAVFILVCCNISQA. A receptor-binding lectin domain region spans residues 23 to 199; that stretch reads AVSFIGSTEN…SLNPFTLNDT (177 aa). A carbohydrate contacts are provided by residues 65–66, 110–111, and 139–142; these read AN, DT, and STQG. Cys-75 and Cys-132 are joined by a disulfide. The fimbrillin-binding domain stretch occupies residues 200–344; it reads VTSCRLLTPS…GISTFTFSYQ (145 aa). The tract at residues 288–308 is disordered; it reads LKFGPDSPVKGNENQWQLSTG. The segment covering 299–308 has biased composition (polar residues); that stretch reads NENQWQLSTG.

It belongs to the fimbrial protein family.

The protein localises to the fimbrium. Functionally, essential fimbrial adhesion factor that mediates binding to N-acetylglucosamine-containing receptors in the host intestinal microvilli, leading to colonization of the intestinal tissue, and diarrhea or septicemia. Also confers adhesiveness to laminin and basement membranes. The sequence is that of F17a-G fimbrial adhesin (f17aG) from Escherichia coli.